The primary structure comprises 246 residues: Uridylate kinase (246 aa).

An ATP-binding site is contributed by 11 to 14 (KISG). Gly53 is a UMP binding site. Residues Gly54 and Arg58 each coordinate ATP. Residues Asp74 and 135 to 142 (TGSPYLTT) contribute to the UMP site. Residues Thr162, Tyr169, and Asp172 each coordinate ATP.

It belongs to the UMP kinase family. As to quaternary structure, homohexamer.

The protein resides in the cytoplasm. The enzyme catalyses UMP + ATP = UDP + ADP. It functions in the pathway pyrimidine metabolism; CTP biosynthesis via de novo pathway; UDP from UMP (UMPK route): step 1/1. With respect to regulation, inhibited by UTP. Its function is as follows. Catalyzes the reversible phosphorylation of UMP to UDP. This chain is Uridylate kinase, found in Chlamydia abortus (strain DSM 27085 / S26/3) (Chlamydophila abortus).